Reading from the N-terminus, the 264-residue chain is Phosphonoacetaldehyde hydrolase (264 aa).

The active-site Nucleophile is the Asp9. Mg(2+) is bound by residues Asp9 and Ala11. The Schiff-base intermediate with substrate role is filled by Lys50. Asp183 serves as a coordination point for Mg(2+).

It belongs to the HAD-like hydrolase superfamily. PhnX family. Homodimer. The cofactor is Mg(2+).

The enzyme catalyses phosphonoacetaldehyde + H2O = acetaldehyde + phosphate + H(+). In terms of biological role, involved in phosphonate degradation. In Bacillus mycoides (strain KBAB4) (Bacillus weihenstephanensis), this protein is Phosphonoacetaldehyde hydrolase.